Here is a 456-residue protein sequence, read N- to C-terminus: Glutamyl-tRNA reductase (456 aa).

Residues 49-52 (TCNR), serine 109, 114-116 (EQQ), and glutamine 120 each bind substrate. The active-site Nucleophile is the cysteine 50. 189–194 (GAGSMG) serves as a coordination point for NADP(+).

Belongs to the glutamyl-tRNA reductase family. In terms of assembly, homodimer.

It catalyses the reaction (S)-4-amino-5-oxopentanoate + tRNA(Glu) + NADP(+) = L-glutamyl-tRNA(Glu) + NADPH + H(+). It participates in porphyrin-containing compound metabolism; protoporphyrin-IX biosynthesis; 5-aminolevulinate from L-glutamyl-tRNA(Glu): step 1/2. Catalyzes the NADPH-dependent reduction of glutamyl-tRNA(Glu) to glutamate 1-semialdehyde (GSA). This chain is Glutamyl-tRNA reductase, found in Mycolicibacterium vanbaalenii (strain DSM 7251 / JCM 13017 / BCRC 16820 / KCTC 9966 / NRRL B-24157 / PYR-1) (Mycobacterium vanbaalenii).